The sequence spans 456 residues: Bifunctional protein GlmU (456 aa).

Residues Met1–Arg229 form a pyrophosphorylase region. UDP-N-acetyl-alpha-D-glucosamine is bound by residues Leu11–Gly14, Lys25, Gln76, Gly81–Thr82, Tyr103–Asp105, Gly140, Glu154, Asn169, and Asn227. Mg(2+) is bound at residue Asp105. Position 227 (Asn227) interacts with Mg(2+). The tract at residues Leu230 to Ala250 is linker. The interval Gly251 to Lys456 is N-acetyltransferase. UDP-N-acetyl-alpha-D-glucosamine contacts are provided by Arg333 and Lys351. Residue His363 is the Proton acceptor of the active site. Tyr366 and Asn377 together coordinate UDP-N-acetyl-alpha-D-glucosamine. Acetyl-CoA-binding positions include Ala380, Asn386–Tyr387, Ser405, Ala423, and Arg440.

This sequence in the N-terminal section; belongs to the N-acetylglucosamine-1-phosphate uridyltransferase family. It in the C-terminal section; belongs to the transferase hexapeptide repeat family. In terms of assembly, homotrimer. Mg(2+) serves as cofactor.

Its subcellular location is the cytoplasm. It carries out the reaction alpha-D-glucosamine 1-phosphate + acetyl-CoA = N-acetyl-alpha-D-glucosamine 1-phosphate + CoA + H(+). The enzyme catalyses N-acetyl-alpha-D-glucosamine 1-phosphate + UTP + H(+) = UDP-N-acetyl-alpha-D-glucosamine + diphosphate. Its pathway is nucleotide-sugar biosynthesis; UDP-N-acetyl-alpha-D-glucosamine biosynthesis; N-acetyl-alpha-D-glucosamine 1-phosphate from alpha-D-glucosamine 6-phosphate (route II): step 2/2. It participates in nucleotide-sugar biosynthesis; UDP-N-acetyl-alpha-D-glucosamine biosynthesis; UDP-N-acetyl-alpha-D-glucosamine from N-acetyl-alpha-D-glucosamine 1-phosphate: step 1/1. It functions in the pathway bacterial outer membrane biogenesis; LPS lipid A biosynthesis. Its function is as follows. Catalyzes the last two sequential reactions in the de novo biosynthetic pathway for UDP-N-acetylglucosamine (UDP-GlcNAc). The C-terminal domain catalyzes the transfer of acetyl group from acetyl coenzyme A to glucosamine-1-phosphate (GlcN-1-P) to produce N-acetylglucosamine-1-phosphate (GlcNAc-1-P), which is converted into UDP-GlcNAc by the transfer of uridine 5-monophosphate (from uridine 5-triphosphate), a reaction catalyzed by the N-terminal domain. The polypeptide is Bifunctional protein GlmU (Escherichia coli O139:H28 (strain E24377A / ETEC)).